A 135-amino-acid chain; its full sequence is MSARSKARKRALDVLFASDVRGEDAVAALDRAIAEGEGPTNDYTATLVRGVVEHQARIDELLSSYSHGWALDRMPAVDRNVLRLGVWELLYADDVPDAVAVSEAMALVTDLSTDESPQFVNGILGSIVRNKPSLA.

This sequence belongs to the NusB family.

Its function is as follows. Involved in transcription antitermination. Required for transcription of ribosomal RNA (rRNA) genes. Binds specifically to the boxA antiterminator sequence of the ribosomal RNA (rrn) operons. This chain is Transcription antitermination protein NusB, found in Nocardioides sp. (strain ATCC BAA-499 / JS614).